The primary structure comprises 472 residues: Deoxyribodipyrimidine photo-lyase (472 aa).

Residues 2–134 (TTHLVWFRQD…VCEGFDDSVI (133 aa)) form the Photolyase/cryptochrome alpha/beta domain. Residues asparagine 109 and glutamate 110 each contribute to the (6R)-5,10-methylene-5,6,7,8-tetrahydrofolate site. Tyrosine 223 provides a ligand contact to FAD. Arginine 227 lines the DNA pocket. FAD contacts are provided by residues 235-239 (TSRLS), tryptophan 272, and 275-282 (ELIWREFY). Interaction with DNA regions lie at residues 275–282 (ELIWREFY) and 342–343 (NR). Position 373 to 375 (373 to 375 (DGD)) interacts with FAD. Position 405 (glutamine 405) interacts with DNA.

Belongs to the DNA photolyase class-1 family. Monomer. FAD serves as cofactor. Requires (6R)-5,10-methylene-5,6,7,8-tetrahydrofolate as cofactor.

The catalysed reaction is cyclobutadipyrimidine (in DNA) = 2 pyrimidine residues (in DNA).. In terms of biological role, involved in repair of UV radiation-induced DNA damage. Catalyzes the light-dependent monomerization (300-600 nm) of cyclobutyl pyrimidine dimers (in cis-syn configuration), which are formed between adjacent bases on the same DNA strand upon exposure to ultraviolet radiation. The sequence is that of Deoxyribodipyrimidine photo-lyase (phrB) from Escherichia coli (strain K12).